The sequence spans 397 residues: tRNA-specific 2-thiouridylase MnmA (397 aa).

ATP contacts are provided by residues A6–S13 and L32. C101 (nucleophile) is an active-site residue. A disulfide bridge links C101 with C199. Residue G125 participates in ATP binding. The tract at residues K148–Q150 is interaction with tRNA. C199 functions as the Cysteine persulfide intermediate in the catalytic mechanism.

This sequence belongs to the MnmA/TRMU family.

It is found in the cytoplasm. It carries out the reaction S-sulfanyl-L-cysteinyl-[protein] + uridine(34) in tRNA + AH2 + ATP = 2-thiouridine(34) in tRNA + L-cysteinyl-[protein] + A + AMP + diphosphate + H(+). Functionally, catalyzes the 2-thiolation of uridine at the wobble position (U34) of tRNA, leading to the formation of s(2)U34. The sequence is that of tRNA-specific 2-thiouridylase MnmA from Clavibacter sepedonicus (Clavibacter michiganensis subsp. sepedonicus).